The chain runs to 505 residues: RNA-splicing ligase RtcB homolog (505 aa).

Mn(2+)-binding residues include aspartate 119, cysteine 122, histidine 227, histidine 259, and histidine 353. 226–230 (NHYGE) contacts GMP. GMP contacts are provided by residues 353–354 (HN), 402–405 (GGTM), serine 409, 428–431 (HGAG), and lysine 504. The GMP-histidine intermediate role is filled by histidine 428.

It belongs to the RtcB family. As to quaternary structure, catalytic component of the tRNA-splicing ligase complex. The cofactor is Mn(2+).

It catalyses the reaction a 3'-end 3'-phospho-ribonucleotide-RNA + a 5'-end dephospho-ribonucleoside-RNA + GTP = a ribonucleotidyl-ribonucleotide-RNA + GMP + diphosphate. It carries out the reaction a 3'-end 2',3'-cyclophospho-ribonucleotide-RNA + a 5'-end dephospho-ribonucleoside-RNA + GTP + H2O = a ribonucleotidyl-ribonucleotide-RNA + GMP + diphosphate + H(+). Catalytic subunit of the tRNA-splicing ligase complex that acts by directly joining spliced tRNA halves to mature-sized tRNAs by incorporating the precursor-derived splice junction phosphate into the mature tRNA as a canonical 3',5'-phosphodiester. May act as an RNA ligase with broad substrate specificity, and may function toward other RNAs. This chain is RNA-splicing ligase RtcB homolog, found in Brugia malayi (Filarial nematode worm).